The primary structure comprises 392 residues: DNA-directed RNA polymerase subunit Rpo1C (392 aa).

Belongs to the RNA polymerase beta' chain family. Part of the 13-subunit RNA polymerase complex.

The protein resides in the cytoplasm. It carries out the reaction RNA(n) + a ribonucleoside 5'-triphosphate = RNA(n+1) + diphosphate. Its function is as follows. DNA-dependent RNA polymerase (RNAP) catalyzes the transcription of DNA into RNA using the four ribonucleoside triphosphates as substrates. Forms part of the jaw domain. The polypeptide is DNA-directed RNA polymerase subunit Rpo1C (Saccharolobus solfataricus (strain ATCC 35092 / DSM 1617 / JCM 11322 / P2) (Sulfolobus solfataricus)).